The chain runs to 609 residues: Hemagglutinin/proteinase (609 aa).

An N-terminal signal peptide occupies residues 1–24 (MKMIQRPLNWLVLAGAATGFPLYA). The propeptide occupies 25-196 (AQMVTIDDAS…LDQWDGINHA (172 aa)). His343 contacts Zn(2+). The active site involves Glu344. Zn(2+) is bound by residues His347 and Glu367. His426 acts as the Proton donor in catalysis.

The protein belongs to the peptidase M4 family. The cofactor is Zn(2+).

It localises to the secreted. Its function is as follows. May play a role in the pathogenesis of cholera. Hap nicks and activates the A subunit of cholera enterotoxin and related enterotoxins. The protein is Hemagglutinin/proteinase (hap) of Vibrio cholerae serotype O1 (strain ATCC 39315 / El Tor Inaba N16961).